We begin with the raw amino-acid sequence, 229 residues long: MKRKLAKLVLVRHGESVANRDNVYTGWNDVPLSKKGIAQAKNAGLKVEKIAEFAPTHIHTSVLSRAIMTANIIADVCSFLYLPITKTWRLNERHYGALRGINKDVSKKIFGTNQVLEWRRGFDSVPPLLTQPVQDRRYQKYDMRLMPQGESLHQTQERLMPYFWDHIAPELMAGHDQLVVAHGSSLRALIKKIEDISNEDIVKVEVPNAEPIVYTFDTDLHIVKKEILH.

Substrate is bound by residues 12 to 19, 25 to 26, R65, 92 to 95, K103, and 119 to 120; these read RHGESVAN, TG, ERHY, and RR. H13 functions as the Tele-phosphohistidine intermediate in the catalytic mechanism. Catalysis depends on E92, which acts as the Proton donor/acceptor.

It belongs to the phosphoglycerate mutase family. BPG-dependent PGAM subfamily.

The catalysed reaction is (2R)-2-phosphoglycerate = (2R)-3-phosphoglycerate. It functions in the pathway carbohydrate degradation; glycolysis; pyruvate from D-glyceraldehyde 3-phosphate: step 3/5. Its function is as follows. Catalyzes the interconversion of 2-phosphoglycerate and 3-phosphoglycerate. The chain is 2,3-bisphosphoglycerate-dependent phosphoglycerate mutase 2 from Lactobacillus johnsonii (strain CNCM I-12250 / La1 / NCC 533).